Here is a 443-residue protein sequence, read N- to C-terminus: tRNA-2-methylthio-N(6)-dimethylallyladenosine synthase (443 aa).

The region spanning 3–120 is the MTTase N-terminal domain; sequence SKLYIKTFGC…LPELIDARRR (118 aa). The [4Fe-4S] cluster site is built by Cys-12, Cys-49, Cys-83, Cys-157, Cys-161, and Cys-164. The Radical SAM core domain occupies 143–377; it reads RTTGATAFVS…KIQRNAQMIS (235 aa). Residues 378-441 form the TRAM domain; the sequence is QSMVDTIQRV…SHTLRGEISD (64 aa).

This sequence belongs to the methylthiotransferase family. MiaB subfamily. As to quaternary structure, monomer. Requires [4Fe-4S] cluster as cofactor.

The protein resides in the cytoplasm. It carries out the reaction N(6)-dimethylallyladenosine(37) in tRNA + (sulfur carrier)-SH + AH2 + 2 S-adenosyl-L-methionine = 2-methylsulfanyl-N(6)-dimethylallyladenosine(37) in tRNA + (sulfur carrier)-H + 5'-deoxyadenosine + L-methionine + A + S-adenosyl-L-homocysteine + 2 H(+). Functionally, catalyzes the methylthiolation of N6-(dimethylallyl)adenosine (i(6)A), leading to the formation of 2-methylthio-N6-(dimethylallyl)adenosine (ms(2)i(6)A) at position 37 in tRNAs that read codons beginning with uridine. The protein is tRNA-2-methylthio-N(6)-dimethylallyladenosine synthase of Nitrosomonas eutropha (strain DSM 101675 / C91 / Nm57).